The sequence spans 321 residues: Glycolipid transfer protein domain-containing protein 2 (321 aa).

It belongs to the GLTP family.

This is Glycolipid transfer protein domain-containing protein 2 (Gltpd2) from Mus musculus (Mouse).